A 63-amino-acid polypeptide reads, in one-letter code: Lysis protein (63 aa).

The helical transmembrane segment at 21–43 (LYVWIALAIVLSDFTSIFSHWIW) threads the bilayer.

The protein belongs to the Leviviricetes lysis protein family.

The protein localises to the host cell inner membrane. Its subcellular location is the host cell outer membrane. Functionally, induces the formation of specific membrane adhesion sites between the inner and outer membranes, apparently leading to host cell lysis. Lysis may be performed via activation of host murein hydrolases. This chain is Lysis protein, found in Escherichia coli (Bacteriophage GA).